The sequence spans 535 residues: UDP-glycosyltransferase stmC (535 aa).

Asparagine 70 and asparagine 422 each carry an N-linked (GlcNAc...) asparagine glycan. A helical transmembrane segment spans residues 506–526 (ASNLDLYIVCIAFVAVPVGVA).

The protein belongs to the glycosyltransferase 28 family.

It is found in the membrane. It carries out the reaction stromemycin aglycone + UDP-alpha-D-glucose = stromemycin + UDP + H(+). It catalyses the reaction exophillate aglycone + UDP-alpha-D-glucose = exophillate + UDP + H(+). It functions in the pathway mycotoxin biosynthesis. In terms of biological role, UDP-glycosyltransferase; part of the gene cluster that mediates the biosynthesis of stromemycin, a depside C-glucoside with two unsaturated C9 side chains belonging to aromatic polyketide glycosides. Acts as the tailoring enzyme responsible for 3-C-glucosylation of bininalkenylresorcylic acid produced by the combined action of the HR-PKS stmA and the NR-PKS stmB to yield stromemycin. Possesses a relatively strict acceptor specificity towards bininalkenylresorcylic acid for C-glycosylation, but is able to use several donors including UDP-alpha-D-galactose, UDP-alpha-D-xylose, UDP-alpha-D-4-keto-6-deoxyglucose, UDP-alpha-D-quinovose, and UDP-beta-L-rhamnose. In Aspergillus ustus, this protein is UDP-glycosyltransferase stmC.